We begin with the raw amino-acid sequence, 206 residues long: LexA repressor (206 aa).

A DNA-binding region (H-T-H motif) is located at residues 28 to 48 (VREICNAVGLSSTSTVHGHLS). Catalysis depends on for autocatalytic cleavage activity residues S128 and K166.

The protein belongs to the peptidase S24 family. In terms of assembly, homodimer.

The catalysed reaction is Hydrolysis of Ala-|-Gly bond in repressor LexA.. Represses a number of genes involved in the response to DNA damage (SOS response), including recA and lexA. In the presence of single-stranded DNA, RecA interacts with LexA causing an autocatalytic cleavage which disrupts the DNA-binding part of LexA, leading to derepression of the SOS regulon and eventually DNA repair. The sequence is that of LexA repressor from Ligilactobacillus salivarius (strain UCC118) (Lactobacillus salivarius).